Here is a 70-residue protein sequence, read N- to C-terminus: Large ribosomal subunit protein uL29 (70 aa).

Belongs to the universal ribosomal protein uL29 family.

This chain is Large ribosomal subunit protein uL29, found in Prochlorococcus marinus (strain MIT 9211).